A 339-amino-acid chain; its full sequence is Holliday junction branch migration complex subunit RuvB (339 aa).

The tract at residues 1 to 180 (MTRTITPDMT…FGVISRLEFY (180 aa)) is large ATPase domain (RuvB-L). ATP is bound by residues Leu19, Arg20, Gly61, Lys64, Thr65, Thr66, 127 to 129 (EDF), Arg170, Tyr180, and Arg217. Thr65 contributes to the Mg(2+) binding site. Residues 181–251 (TIEELAFIIT…VVQDALALLE (71 aa)) form a small ATPAse domain (RuvB-S) region. A head domain (RuvB-H) region spans residues 254–339 (HMGFDYMDRM…EPPQGKLFQD (86 aa)). Residues Arg309 and Arg314 each contribute to the DNA site.

Belongs to the RuvB family. Homohexamer. Forms an RuvA(8)-RuvB(12)-Holliday junction (HJ) complex. HJ DNA is sandwiched between 2 RuvA tetramers; dsDNA enters through RuvA and exits via RuvB. An RuvB hexamer assembles on each DNA strand where it exits the tetramer. Each RuvB hexamer is contacted by two RuvA subunits (via domain III) on 2 adjacent RuvB subunits; this complex drives branch migration. In the full resolvosome a probable DNA-RuvA(4)-RuvB(12)-RuvC(2) complex forms which resolves the HJ.

The protein resides in the cytoplasm. It catalyses the reaction ATP + H2O = ADP + phosphate + H(+). The RuvA-RuvB-RuvC complex processes Holliday junction (HJ) DNA during genetic recombination and DNA repair, while the RuvA-RuvB complex plays an important role in the rescue of blocked DNA replication forks via replication fork reversal (RFR). RuvA specifically binds to HJ cruciform DNA, conferring on it an open structure. The RuvB hexamer acts as an ATP-dependent pump, pulling dsDNA into and through the RuvAB complex. RuvB forms 2 homohexamers on either side of HJ DNA bound by 1 or 2 RuvA tetramers; 4 subunits per hexamer contact DNA at a time. Coordinated motions by a converter formed by DNA-disengaged RuvB subunits stimulates ATP hydrolysis and nucleotide exchange. Immobilization of the converter enables RuvB to convert the ATP-contained energy into a lever motion, pulling 2 nucleotides of DNA out of the RuvA tetramer per ATP hydrolyzed, thus driving DNA branch migration. The RuvB motors rotate together with the DNA substrate, which together with the progressing nucleotide cycle form the mechanistic basis for DNA recombination by continuous HJ branch migration. Branch migration allows RuvC to scan DNA until it finds its consensus sequence, where it cleaves and resolves cruciform DNA. This Geotalea daltonii (strain DSM 22248 / JCM 15807 / FRC-32) (Geobacter daltonii) protein is Holliday junction branch migration complex subunit RuvB.